The following is a 262-amino-acid chain: uncharacterized protein (262 aa).

Residues 6–70 (LRINQFLAHY…LKNKKFSVLV (65 aa)) enclose the S4 RNA-binding domain. Residue D108 is the Nucleophile of the active site.

The protein belongs to the pseudouridine synthase RsuA family.

The catalysed reaction is a uridine in RNA = a pseudouridine in RNA. This is an uncharacterized protein from Helicobacter pylori (strain ATCC 700392 / 26695) (Campylobacter pylori).